The chain runs to 260 residues: Indole-3-glycerol phosphate synthase (260 aa).

The protein belongs to the TrpC family.

The enzyme catalyses 1-(2-carboxyphenylamino)-1-deoxy-D-ribulose 5-phosphate + H(+) = (1S,2R)-1-C-(indol-3-yl)glycerol 3-phosphate + CO2 + H2O. Its pathway is amino-acid biosynthesis; L-tryptophan biosynthesis; L-tryptophan from chorismate: step 4/5. This chain is Indole-3-glycerol phosphate synthase, found in Neisseria gonorrhoeae (strain NCCP11945).